Here is a 635-residue protein sequence, read N- to C-terminus: MHGLLLAAGLLSLPLHVLAHPQPSTSTSLAGRAGAVDLNEFRIAHRSSYTSHDEMKKLPSIASFRQGTYLEVATELVKQTMPNMEFRLVDDHYVGDSGIGHVRFRQTMHGIDIDNSDFNVNVGKDGKVLSHGNSFYTGPAPSSNPMVKRDFIDPMQALHGVRKALNLPIKADGAHVEDMSEHKVMFKGTSGALSDPTAKLCYMAKEDGSLALTWRVETDIGDNWLLSYMDAKESSKVHNVVDYVAHATFQVYKWGLADPTEGKREIITNPWNLKTSPLTWLSDGHNNYTATRGNNAIAQYNPDGGNDYENNYRPSPKNLKFEYPYSPDMNPPKTYIDASVTELFYTSNICHDLYYMLGFNEKAGNFQVNNRGQGGKGNDFVILNAQDGSGTNNANFATPPDGQPGRMRAYIWTRANPPRDASFEAGTIIHEYTHGLSNRLCGGPANSRCLNALESGGMGEGWGDFYATAVRLKPNDTRKTNYVKGGWVNNSPKGVRMYPYSTDMNVNPLVYTSNNKLNEVHAIGTVWCTMLYEVLWNLIDKHGKNDGPVPIFENGVPNDGKYLAMKIVMDGMAIQPCNPNFVQARDAILDADMNLTKGANKCEIWKGFAKRGLGVGAKFDPKNRTGSTQVPNECK.

The signal sequence occupies residues 1 to 19 (MHGLLLAAGLLSLPLHVLA). Positions 20 to 246 (HPQPSTSTSL…VHNVVDYVAH (227 aa)) are excised as a propeptide. Residue Asn-287 is glycosylated (N-linked (GlcNAc...) asparagine). His-430 lines the Zn(2+) pocket. Residue Glu-431 is part of the active site. His-434 is a Zn(2+) binding site. 3 N-linked (GlcNAc...) asparagine glycosylation sites follow: Asn-475, Asn-594, and Asn-623.

Belongs to the peptidase M36 family. Requires Zn(2+) as cofactor.

The protein resides in the secreted. Its function is as follows. Secreted metalloproteinase probably acting as a virulence factor. In Trichophyton rubrum (Athlete's foot fungus), this protein is Extracellular metalloproteinase 1 (MEP1).